The primary structure comprises 208 residues: Dual specificity protein phosphatase 22-A (208 aa).

Residues 4 to 144 (GMNKVIDGLY…LQEFQMKQVS (141 aa)) form the Tyrosine-protein phosphatase domain. Cys-88 (phosphocysteine intermediate) is an active-site residue.

It belongs to the protein-tyrosine phosphatase family. Non-receptor class dual specificity subfamily.

The protein resides in the cytoplasm. The protein localises to the nucleus. It catalyses the reaction O-phospho-L-tyrosyl-[protein] + H2O = L-tyrosyl-[protein] + phosphate. It carries out the reaction O-phospho-L-seryl-[protein] + H2O = L-seryl-[protein] + phosphate. The enzyme catalyses O-phospho-L-threonyl-[protein] + H2O = L-threonyl-[protein] + phosphate. In terms of biological role, activates the Jnk signaling pathway. Dephosphorylates and deactivates p38 and stress-activated protein kinase/c-Jun N-terminal kinase (SAPK/JNK). This chain is Dual specificity protein phosphatase 22-A, found in Danio rerio (Zebrafish).